Reading from the N-terminus, the 303-residue chain is N-acetyl-D-glucosamine kinase (303 aa).

ATP contacts are provided by residues Gly4–Lys11 and Gly133–Leu140. Residues His157, Cys177, Cys179, and Cys184 each coordinate Zn(2+).

Belongs to the ROK (NagC/XylR) family. NagK subfamily.

It carries out the reaction N-acetyl-D-glucosamine + ATP = N-acetyl-D-glucosamine 6-phosphate + ADP + H(+). The protein operates within cell wall biogenesis; peptidoglycan recycling. Catalyzes the phosphorylation of N-acetyl-D-glucosamine (GlcNAc) derived from cell-wall degradation, yielding GlcNAc-6-P. This chain is N-acetyl-D-glucosamine kinase, found in Salmonella dublin (strain CT_02021853).